The sequence spans 183 residues: MTETPMMDDLERVLYNQDDIQKRIRELAAELTEFYEDKNPVMICVLTGAVFFYTDLLKHLDFQLEPDYIICSSYSGTKSTGNLTISKDLKTNIEGRHVLVVEDIIDTGLTMYQLLNNLQMRKPASLKVCTLCDKDIGKKAYDVPIDYCGFVVENRYIIGYGFDFHNKYRNLPVIGILKESVYT.

GMP contacts are provided by residues 102-110 (EDIIDTGLT), Lys-134, and Asp-163. Asp-106 functions as the Proton acceptor in the catalytic mechanism. Mg(2+) is bound at residue Asp-163.

Homodimer. It depends on Mg(2+) as a cofactor.

The protein resides in the cytoplasm. It catalyses the reaction IMP + diphosphate = hypoxanthine + 5-phospho-alpha-D-ribose 1-diphosphate. The catalysed reaction is GMP + diphosphate = guanine + 5-phospho-alpha-D-ribose 1-diphosphate. It carries out the reaction XMP + diphosphate = xanthine + 5-phospho-alpha-D-ribose 1-diphosphate. Its pathway is purine metabolism; GMP biosynthesis via salvage pathway; GMP from guanine: step 1/1. The protein operates within purine metabolism; IMP biosynthesis via salvage pathway; IMP from hypoxanthine: step 1/1. It participates in purine metabolism; XMP biosynthesis via salvage pathway; XMP from xanthine: step 1/1. Essential in nucleic acid metabolism of T.foetus because the parasite is unable to synthesize purine nucleotides de novo and relies on the HGXPRTase activities for its purine requirements by salvaging purine bases from the host. Works with guanine, hypoxanthine and xanthine. This Tritrichomonas foetus (Trichomonas foetus) protein is Hypoxanthine-guanine-xanthine phosphoribosyltransferase (HPT).